A 166-amino-acid chain; its full sequence is Large ribosomal subunit protein uL10 (166 aa).

As to quaternary structure, part of the ribosomal stalk of the 50S ribosomal subunit. The N-terminus interacts with L11 and 23S rRNA to form the base of the stalk. The C-terminus forms an elongated spine to which L12 dimers bind in a sequential fashion forming a pentameric L10(L12)2(L12)2 complex.

Its function is as follows. Forms part of the ribosomal stalk, playing a central role in the interaction of the ribosome with GTP-bound translation factors (such as IF-2, EF-Tu, EF-G and RF3). The chain is Large ribosomal subunit protein uL10 (rplJ) from Bacillus subtilis (strain 168).